We begin with the raw amino-acid sequence, 491 residues long: Ketol-acid reductoisomerase (NADP(+)) (491 aa).

The 194-residue stretch at 15-208 (AQLGKCRFMG…GGHRAGVLES (194 aa)) folds into the KARI N-terminal Rossmann domain. NADP(+)-binding positions include 45–48 (CGAQ), Arg-68, Arg-76, Ser-78, and 108–110 (DKQ). His-132 is a catalytic residue. Gly-158 is a binding site for NADP(+). KARI C-terminal knotted domains follow at residues 209–344 (SFVA…TAPQ) and 345–484 (YEGK…MTDM). Mg(2+) is bound by residues Asp-217, Glu-221, Glu-389, and Glu-393. Ser-414 is a binding site for substrate.

Belongs to the ketol-acid reductoisomerase family. Mg(2+) serves as cofactor.

The enzyme catalyses (2R)-2,3-dihydroxy-3-methylbutanoate + NADP(+) = (2S)-2-acetolactate + NADPH + H(+). It carries out the reaction (2R,3R)-2,3-dihydroxy-3-methylpentanoate + NADP(+) = (S)-2-ethyl-2-hydroxy-3-oxobutanoate + NADPH + H(+). The protein operates within amino-acid biosynthesis; L-isoleucine biosynthesis; L-isoleucine from 2-oxobutanoate: step 2/4. Its pathway is amino-acid biosynthesis; L-valine biosynthesis; L-valine from pyruvate: step 2/4. Functionally, involved in the biosynthesis of branched-chain amino acids (BCAA). Catalyzes an alkyl-migration followed by a ketol-acid reduction of (S)-2-acetolactate (S2AL) to yield (R)-2,3-dihydroxy-isovalerate. In the isomerase reaction, S2AL is rearranged via a Mg-dependent methyl migration to produce 3-hydroxy-3-methyl-2-ketobutyrate (HMKB). In the reductase reaction, this 2-ketoacid undergoes a metal-dependent reduction by NADPH to yield (R)-2,3-dihydroxy-isovalerate. The polypeptide is Ketol-acid reductoisomerase (NADP(+)) (Escherichia coli O8 (strain IAI1)).